The sequence spans 555 residues: Formate--tetrahydrofolate ligase (555 aa).

Residue 65 to 72 (TPAGEGKT) coordinates ATP.

It belongs to the formate--tetrahydrofolate ligase family.

It catalyses the reaction (6S)-5,6,7,8-tetrahydrofolate + formate + ATP = (6R)-10-formyltetrahydrofolate + ADP + phosphate. It participates in one-carbon metabolism; tetrahydrofolate interconversion. This Caldanaerobacter subterraneus subsp. tengcongensis (strain DSM 15242 / JCM 11007 / NBRC 100824 / MB4) (Thermoanaerobacter tengcongensis) protein is Formate--tetrahydrofolate ligase.